Here is a 451-residue protein sequence, read N- to C-terminus: MHGYFGCNAAAEPGYSAFLGTPQICVTKMSTRNCQGMDSVIKPLDTIPEDKKVRVQRTQSTFDPFEKPANQVKRVHSENNACINFKTSSTGKESPKVRRHSSPSSPTSPKFGKADSYEKLEKLGEGSYATVYKGKSKVNGKLVALKVIRLQEEEGTPFTAIREASLLKGLKHANIVLLHDIIHTKETLTLVFEYVHTDLCQYMDKHPGGLHPDNVKLFLFQLLRGLSYIHQRYILHRDLKPQNLLISDTGELKLADFGLARAKSVPSHTYSNEVVTLWYRPPDVLLGSTEYSTCLDMWGVGCIFVEMIQGVAAFPGMKDIQDQLERIFLVLGTPNEDTWPGVHSLPHFKPERFTLYSSKNLRQAWNKLSYVNHAEDLASKLLQCSPKNRLSAQAALSHEYFSDLPPRLWELTDMSSIFTIPNVRLQPEAGESMRAFGKNNSYGKSLSNSKH.

2 positions are modified to phosphoserine: Ser60 and Ser77. The segment at 84 to 114 (NFKTSSTGKESPKVRRHSSPSSPTSPKFGKA) is disordered. Ser116 bears the Phosphoserine mark. In terms of domain architecture, Protein kinase spans 117 to 401 (YEKLEKLGEG…AQAALSHEYF (285 aa)). ATP contacts are provided by residues 123–131 (LGEGSYATV) and Lys146. Asp238 functions as the Proton acceptor in the catalytic mechanism.

Belongs to the protein kinase superfamily. CMGC Ser/Thr protein kinase family. CDC2/CDKX subfamily. In terms of assembly, found in a complex with LRP6, CCNY and CAPRIN2 during G2/M stage; CAPRIN2 functions as a scaffold for the complex by binding to CCNY via its N terminus and to CDK14 via its C terminus. Interacts with CCNY; CCNY mediates its recruitment to the plasma membrane and promotes phosphorylation of LRP6. Interacts with CCDN3 and CDKN1A. Interacts with SEPT8. Interacts with 14-3-3 proteina YWHAB, YWHAE, YWHAH and YWHAQ.

It localises to the cell membrane. Its subcellular location is the cytoplasm. It is found in the nucleus. The enzyme catalyses L-seryl-[protein] + ATP = O-phospho-L-seryl-[protein] + ADP + H(+). It catalyses the reaction L-threonyl-[protein] + ATP = O-phospho-L-threonyl-[protein] + ADP + H(+). Serine/threonine-protein kinase activity is promoted by associated cyclins CCDN3 and CCNY and repressed by CDKN1A. Its function is as follows. Serine/threonine-protein kinase involved in the control of the eukaryotic cell cycle, whose activity is controlled by an associated cyclin. Acts as a cell-cycle regulator of Wnt signaling pathway during G2/M phase by mediating the phosphorylation of LRP6 at 'Ser-1490', leading to the activation of the Wnt signaling pathway. Acts as a regulator of cell cycle progression and cell proliferation via its interaction with CCDN3. Phosphorylates RB1 in vitro, however the relevance of such result remains to be confirmed in vivo. May also play a role in meiosis, neuron differentiation and may indirectly act as a negative regulator of insulin-responsive glucose transport. This chain is Cyclin-dependent kinase 14 (CDK14), found in Plecturocebus moloch (Dusky titi monkey).